The following is a 476-amino-acid chain: Proline--tRNA ligase 2 (476 aa).

It belongs to the class-II aminoacyl-tRNA synthetase family. ProS type 3 subfamily. As to quaternary structure, homodimer.

It is found in the cytoplasm. The catalysed reaction is tRNA(Pro) + L-proline + ATP = L-prolyl-tRNA(Pro) + AMP + diphosphate. Its function is as follows. Catalyzes the attachment of proline to tRNA(Pro) in a two-step reaction: proline is first activated by ATP to form Pro-AMP and then transferred to the acceptor end of tRNA(Pro). This chain is Proline--tRNA ligase 2, found in Bacillus thuringiensis subsp. konkukian (strain 97-27).